Consider the following 205-residue polypeptide: Ras-related protein RABD1 (205 aa).

Ser2 bears the N-acetylserine mark. Residues 15-23 (GDSSVGKSC), 33-40 (YIDSYIST), 63-67 (DTAGQ), 121-124 (NKND), and 151-153 (SAK) contribute to the GTP site. The Effector region signature appears at 37–45 (YISTIGVDF). 2 stretches are compositionally biased toward polar residues: residues 174–186 (GSQT…SGPG) and 194–205 (PIQQNNGGCCGQ). The tract at residues 174–205 (GSQTNANKTSGPGTVQMKGQPIQQNNGGCCGQ) is disordered. Residues Cys202 and Cys203 are each lipidated (S-geranylgeranyl cysteine).

The protein belongs to the small GTPase superfamily. Rab family. As to quaternary structure, does not interact with GC5. Interacts with XI-2/MYA2.

It localises to the golgi apparatus. It is found in the trans-Golgi network membrane. The protein localises to the golgi apparatus membrane. Its function is as follows. Protein transport. Regulator of membrane traffic from the Golgi apparatus towards the endoplasmic reticulum (ER). The protein is Ras-related protein RABD1 (RABD1) of Arabidopsis thaliana (Mouse-ear cress).